A 216-amino-acid polypeptide reads, in one-letter code: Urease operon 23 kDa accessory protein (216 aa).

Functionally, involved in the expression of hydrogenase activity. May be a regulatory gene affecting the expression of the hydrogenase operon or could be involved in the process of nickel incorporation into the hydrogenase apoenzyme. The polypeptide is Urease operon 23 kDa accessory protein (Rhizobium meliloti (strain 1021) (Ensifer meliloti)).